A 427-amino-acid polypeptide reads, in one-letter code: DEAD-box ATP-dependent RNA helicase 56 (427 aa).

The segment at 1–30 is disordered; the sequence is MGDARDNEAYEEELLDYEEEDEKVPDSGNK. A compositionally biased stretch (acidic residues) spans 9 to 23; the sequence is AYEEELLDYEEEDEK. The Q motif motif lies at 46-74; sequence SGFRDFLLKPELLRAIVDSGFEHPSEVQH. The region spanning 77 to 250 is the Helicase ATP-binding domain; that stretch reads IPQAILGMDV…KKFMQDPMEI (174 aa). 90-97 serves as a coordination point for ATP; the sequence is AKSGMGKT. Residues 197-200 carry the DECD box motif; that stretch reads DECD. In terms of domain architecture, Helicase C-terminal spans 278–423; that stretch reads KLNDLLDALD…ELPEQIDTST (146 aa).

It belongs to the DEAD box helicase family. DECD subfamily. Interacts with ALY2 and MOS11.

It is found in the nucleus. The catalysed reaction is ATP + H2O = ADP + phosphate + H(+). ATP-dependent RNA helicase involved in pre-mRNA splicing. Required for the export of mRNA out of the nucleus. In addition to ssRNA and dsRNA, binds dsDNA, but not ssDNA. The sequence is that of DEAD-box ATP-dependent RNA helicase 56 (RH56) from Arabidopsis thaliana (Mouse-ear cress).